Consider the following 682-residue polypeptide: Potassium-transporting ATPase ATP-binding subunit (682 aa).

Helical transmembrane passes span 34–54 (PVMFIVWIGSLLTTCISIAMA), 62–82 (ALFSAAISGWLWVTVLFANFA), 219–239 (IALTILLIALTIVFLLATATL), and 254–274 (VLVALLVCLIPTTIGGLLSAI). Residue aspartate 307 is the 4-aspartylphosphate intermediate of the active site. ATP is bound by residues aspartate 344, glutamate 348, 377 to 384 (FTAQSRMS), and lysine 395. Residues aspartate 518 and aspartate 522 each coordinate Mg(2+). Helical transmembrane passes span 588–608 (FAIIPAAFAATYPQLNALNIM), 616–636 (AILSAVIFNALIIVFLIPLAL), and 656–676 (IYGLGGLLVPFIGIKVIDLLL).

This sequence belongs to the cation transport ATPase (P-type) (TC 3.A.3) family. Type IA subfamily. As to quaternary structure, the system is composed of three essential subunits: KdpA, KdpB and KdpC.

The protein resides in the cell inner membrane. The catalysed reaction is K(+)(out) + ATP + H2O = K(+)(in) + ADP + phosphate + H(+). Part of the high-affinity ATP-driven potassium transport (or Kdp) system, which catalyzes the hydrolysis of ATP coupled with the electrogenic transport of potassium into the cytoplasm. This subunit is responsible for energy coupling to the transport system and for the release of the potassium ions to the cytoplasm. This is Potassium-transporting ATPase ATP-binding subunit from Shigella boydii serotype 4 (strain Sb227).